The chain runs to 89 residues: Small ribosomal subunit protein uS15 (89 aa).

The protein belongs to the universal ribosomal protein uS15 family. As to quaternary structure, part of the 30S ribosomal subunit. Forms a bridge to the 50S subunit in the 70S ribosome, contacting the 23S rRNA.

One of the primary rRNA binding proteins, it binds directly to 16S rRNA where it helps nucleate assembly of the platform of the 30S subunit by binding and bridging several RNA helices of the 16S rRNA. Functionally, forms an intersubunit bridge (bridge B4) with the 23S rRNA of the 50S subunit in the ribosome. This chain is Small ribosomal subunit protein uS15, found in Cereibacter sphaeroides (strain ATCC 17023 / DSM 158 / JCM 6121 / CCUG 31486 / LMG 2827 / NBRC 12203 / NCIMB 8253 / ATH 2.4.1.) (Rhodobacter sphaeroides).